A 297-amino-acid chain; its full sequence is HTH-type transcriptional regulator ArgP (297 aa).

An HTH lysR-type domain is found at 4–60 (PDYRTLQALDAVIRERGFERAAQKLCITQSAVSQRIKQLENMFGQPLLVRTVPPRPT). The H-T-H motif DNA-binding region spans 21–40 (FERAAQKLCITQSAVSQRIK).

Belongs to the LysR transcriptional regulatory family. Homodimer.

Its function is as follows. Controls the transcription of genes involved in arginine and lysine metabolism. This Salmonella dublin (strain CT_02021853) protein is HTH-type transcriptional regulator ArgP.